The chain runs to 402 residues: Tryptophan synthase beta chain (402 aa).

At lysine 91 the chain carries N6-(pyridoxal phosphate)lysine.

Belongs to the TrpB family. As to quaternary structure, tetramer of two alpha and two beta chains. Pyridoxal 5'-phosphate is required as a cofactor.

The catalysed reaction is (1S,2R)-1-C-(indol-3-yl)glycerol 3-phosphate + L-serine = D-glyceraldehyde 3-phosphate + L-tryptophan + H2O. It functions in the pathway amino-acid biosynthesis; L-tryptophan biosynthesis; L-tryptophan from chorismate: step 5/5. In terms of biological role, the beta subunit is responsible for the synthesis of L-tryptophan from indole and L-serine. In Streptococcus thermophilus (strain CNRZ 1066), this protein is Tryptophan synthase beta chain.